The chain runs to 1020 residues: DNA-directed RNA polymerase 2, chloroplastic/mitochondrial (1020 aa).

Residues K314–K336 form a disordered region. Catalysis depends on residues D721, K796, and D953.

This sequence belongs to the phage and mitochondrial RNA polymerase family. As to expression, the highest levels of expression are detected in the mature leaves. The level of expression is lowest in the cotyledons.

The protein localises to the plastid. It is found in the chloroplast. The protein resides in the mitochondrion. The catalysed reaction is RNA(n) + a ribonucleoside 5'-triphosphate = RNA(n+1) + diphosphate. In terms of biological role, DNA-dependent RNA polymerase catalyzes the transcription of DNA into RNA using the four ribonucleoside triphosphates as substrates. In Nicotiana sylvestris (Wood tobacco), this protein is DNA-directed RNA polymerase 2, chloroplastic/mitochondrial (RPOT2).